The sequence spans 449 residues: Adenosylhomocysteinase (449 aa).

Ser2 is subject to N-acetylserine. Residue Lys21 forms a Glycyl lysine isopeptide (Lys-Gly) (interchain with G-Cter in ubiquitin) linkage. Residues Thr58, Asp134, and Glu159 each coordinate substrate. Thr160–Thr162 lines the NAD(+) pocket. Substrate contacts are provided by Lys189 and Asp193. NAD(+) is bound by residues Asn194, Gly223–Gly228, Glu246, Ile302–His304, and Asn349. Thr393 is subject to Phosphothreonine. Lys413 participates in a covalent cross-link: Glycyl lysine isopeptide (Lys-Gly) (interchain with G-Cter in ubiquitin).

Belongs to the adenosylhomocysteinase family. Requires NAD(+) as cofactor.

The enzyme catalyses S-adenosyl-L-homocysteine + H2O = L-homocysteine + adenosine. The protein operates within amino-acid biosynthesis; L-homocysteine biosynthesis; L-homocysteine from S-adenosyl-L-homocysteine: step 1/1. Adenosylhomocysteine is a competitive inhibitor of S-adenosyl-L-methionine-dependent methyl transferase reactions; therefore adenosylhomocysteinase may play a key role in the control of methylations via regulation of the intracellular concentration of adenosylhomocysteine. This chain is Adenosylhomocysteinase (SAH1), found in Saccharomyces cerevisiae (strain ATCC 204508 / S288c) (Baker's yeast).